The sequence spans 108 residues: MATSKLQAIWNHPAGPKTIHFWAPTFKWGISIANIADFAKPPEKLSYPQQIAVTCTGVIWSRYSMVINPKNWNLFSVNVAMAGTGIYQLARKIKHDYATEAEPAVASE.

3 consecutive transmembrane segments (helical) span residues 19-35 (IHFW…IANI), 51-67 (IAVT…SMVI), and 74-90 (LFSV…YQLA).

This sequence belongs to the mitochondrial pyruvate carrier (MPC) (TC 2.A.105) family.

The protein resides in the mitochondrion inner membrane. In terms of biological role, mediates the uptake of pyruvate into mitochondria. This is Mitochondrial pyruvate carrier 4 from Arabidopsis thaliana (Mouse-ear cress).